Reading from the N-terminus, the 685-residue chain is Galactocerebrosidase (685 aa).

The signal sequence occupies residues 1–42 (MAEWLLSASRQRRVKAMTAAAGSAGRAAVPFLLCALLAPGGA). A substrate-binding site is contributed by threonine 109. Asparagine 143 is a glycosylation site (N-linked (GlcNAc...) asparagine). Positions 151 and 197 each coordinate substrate. The Proton donor/acceptor role is filled by glutamate 198. Glutamate 274 acts as the Nucleophile in catalysis. A disulfide bridge links cysteine 287 with cysteine 394. The N-linked (GlcNAc...) asparagine glycan is linked to asparagine 379. Arginine 396 contacts substrate. Asparagine 403, asparagine 451, asparagine 556, asparagine 559, and asparagine 602 each carry an N-linked (GlcNAc...) asparagine glycan.

Belongs to the glycosyl hydrolase 59 family.

The protein localises to the lysosome. The catalysed reaction is a beta-D-galactosyl-(1&lt;-&gt;1')-N-acylsphing-4-enine + H2O = an N-acylsphing-4-enine + D-galactose. The enzyme catalyses beta-D-galactosyl-(1&lt;-&gt;1)-sphing-4-enine + H2O = sphing-4-enine + D-galactose. It catalyses the reaction a D-galactosylceramide + H2O = an N-acyl-sphingoid base + D-galactose. Functionally, hydrolyzes the galactose ester bonds of glycolipids such as galactosylceramide and galactosylsphingosine. Enzyme with very low activity responsible for the lysosomal catabolism of galactosylceramide, a major lipid in myelin, kidney and epithelial cells of small intestine and colon. The protein is Galactocerebrosidase of Macaca mulatta (Rhesus macaque).